We begin with the raw amino-acid sequence, 391 residues long: Phosphoglycerate kinase (391 aa).

Residues 21 to 23 (DLN), Arg-36, 59 to 62 (HLGR), Arg-113, and Arg-146 each bind substrate. ATP contacts are provided by residues Lys-197, Glu-319, and 345-348 (GGDT).

It belongs to the phosphoglycerate kinase family. In terms of assembly, monomer.

It is found in the cytoplasm. The catalysed reaction is (2R)-3-phosphoglycerate + ATP = (2R)-3-phospho-glyceroyl phosphate + ADP. The protein operates within carbohydrate degradation; glycolysis; pyruvate from D-glyceraldehyde 3-phosphate: step 2/5. In Shewanella piezotolerans (strain WP3 / JCM 13877), this protein is Phosphoglycerate kinase.